The following is an 870-amino-acid chain: Valine--tRNA ligase (870 aa).

Residues 42–52 (PNVTGVLHIGH) carry the 'HIGH' region motif. Residues 527–531 (KMSKS) carry the 'KMSKS' region motif. Residue Lys530 coordinates ATP. A coiled-coil region spans residues 800–870 (LENVDLSGIL…ISVELQNLRG (71 aa)).

The protein belongs to the class-I aminoacyl-tRNA synthetase family. ValS type 1 subfamily. As to quaternary structure, monomer.

It localises to the cytoplasm. The catalysed reaction is tRNA(Val) + L-valine + ATP = L-valyl-tRNA(Val) + AMP + diphosphate. Catalyzes the attachment of valine to tRNA(Val). As ValRS can inadvertently accommodate and process structurally similar amino acids such as threonine, to avoid such errors, it has a 'posttransfer' editing activity that hydrolyzes mischarged Thr-tRNA(Val) in a tRNA-dependent manner. The chain is Valine--tRNA ligase from Campylobacter jejuni subsp. jejuni serotype O:2 (strain ATCC 700819 / NCTC 11168).